A 232-amino-acid polypeptide reads, in one-letter code: Small ribosomal subunit protein uS3 (232 aa).

The region spanning 39–107 (IRAFLKKKLY…EVNVNIKEER (69 aa)) is the KH type-2 domain. Positions 212–232 (VQPEKTEDDAPKKTRRPRRGK) are disordered. Over residues 213-223 (QPEKTEDDAPK) the composition is skewed to basic and acidic residues.

Belongs to the universal ribosomal protein uS3 family. Part of the 30S ribosomal subunit. Forms a tight complex with proteins S10 and S14.

In terms of biological role, binds the lower part of the 30S subunit head. Binds mRNA in the 70S ribosome, positioning it for translation. The protein is Small ribosomal subunit protein uS3 of Campylobacter curvus (strain 525.92).